We begin with the raw amino-acid sequence, 269 residues long: Glutamate racemase (269 aa).

Residues 7–8 and 39–40 each bind substrate; these read DS and YG. Cys-70 serves as the catalytic Proton donor/acceptor. Position 71–72 (71–72) interacts with substrate; that stretch reads NT. The Proton donor/acceptor role is filled by Cys-194. A substrate-binding site is contributed by 195–196; it reads TH.

Belongs to the aspartate/glutamate racemases family.

The enzyme catalyses L-glutamate = D-glutamate. Its pathway is cell wall biogenesis; peptidoglycan biosynthesis. Functionally, provides the (R)-glutamate required for cell wall biosynthesis. The protein is Glutamate racemase of Ruegeria pomeroyi (strain ATCC 700808 / DSM 15171 / DSS-3) (Silicibacter pomeroyi).